A 208-amino-acid chain; its full sequence is Component of Sp100-rs (208 aa).

The 116-residue stretch at glycine 6–lysine 121 folds into the HSR domain.

The sequence is that of Component of Sp100-rs (Csprs) from Mus musculus (Mouse).